The sequence spans 367 residues: RNA-binding protein 48 (367 aa).

In terms of domain architecture, RRM spans 46 to 124; the sequence is QYLLIQGVPA…GLLHVCYAPE (79 aa). The span at 217–228 shows a compositional bias: basic and acidic residues; sequence PVDRASDSSKDG. Disordered stretches follow at residues 217–243, 277–303, and 339–367; these read PVDR…HNGS, RTTQ…TNPS, and EVIS…RRRI. The span at 347-356 shows a compositional bias: basic and acidic residues; it reads PPEDKPEDVN.

It belongs to the RBM48 family. In terms of assembly, component of the minor spliceosome. Within this complex, interacts with ARMC7 and PRPF8/PRP8.

Its function is as follows. As a component of the minor spliceosome, involved in the splicing of U12-type introns in pre-mRNAs. This Pongo abelii (Sumatran orangutan) protein is RNA-binding protein 48 (RBM48).